The chain runs to 655 residues: Inactive serine protease scarface (655 aa).

An N-terminal signal peptide occupies residues 1–24 (MSASHFREQLALCITLAVLAAASG). Composition is skewed to polar residues over residues 213–225 (TQAPFRPQPTTAV) and 237–252 (PSTTQHPSYEKVQTSR). The interval 213-319 (TQAPFRPQPT…QPSNQKPIYR (107 aa)) is disordered. The interval 343–407 (KCASALVCTS…PNYVDPWPVN (65 aa)) is CLIP. Cystine bridges form between cysteine 344–cysteine 394, cysteine 350–cysteine 383, cysteine 356–cysteine 395, cysteine 450–cysteine 466, cysteine 547–cysteine 605, cysteine 579–cysteine 587, and cysteine 595–cysteine 623. Residues 421 to 644 (PTGVKDLDAN…DIKWINTAFA (224 aa)) enclose the Peptidase S1 domain.

It belongs to the peptidase S1 family.

Its subcellular location is the secreted. Functionally, inactive serine protease that plays a role in germ-band retraction and dorsal closure morphogenesis in embryogenesis; contributes to amnioserosa attachment and epithelial apico-basal polarity by regulating the localization of laminin LanA on the apical side of the amnioserosa epithelium. Contributes to epithelial morphogenesis probably by regulating the bsk/JNK pathway, as part of a negative-feedback loop, and by modulating the cross-talk between the Egfr, bsk/JNK and dpp signal transduction pathways. In larval development, antagonizes the morphogenetic movements controlled by the bsk/JNK signaling including male genitalia formation and thorax development. The polypeptide is Inactive serine protease scarface (Drosophila melanogaster (Fruit fly)).